The primary structure comprises 254 residues: 14-3-3-like protein GF14 epsilon (254 aa).

Phosphoserine occurs at positions 65 and 188.

Belongs to the 14-3-3 family. In terms of assembly, interacts with DREB1A and DREB1B in the nucleus. Interacts with CINV1.

The protein localises to the nucleus. Its subcellular location is the cytoplasm. In terms of biological role, is associated with a DNA binding complex that binds to the G box, a well-characterized cis-acting DNA regulatory element found in plant genes. The chain is 14-3-3-like protein GF14 epsilon (GRF10) from Arabidopsis thaliana (Mouse-ear cress).